Here is a 294-residue protein sequence, read N- to C-terminus: MNAQLPDVSVSQLPCNLSPLNWVGMQHIDLPTVIDTANQTVNTKVDVYVNLPKSSVKGIHMSRLYHLINHLSVLNTMSIKSVLKQMIDSHQDCGTTAAKIVFKFDLLLKRDAIVSTALSGWKSYPVIIEASIINELFNIEYKLDISYSSTCPCSAALSRQIIKNGFKADFSSQNLIPSADIEAWLEQYATLATPHSQRSIATVVVQPFDYAHDINFVDLIDSIENTLKTPTQTAVKRADEQAFAKLNGENLMFVEDAARRLKMLLDQKYKFWSAQVVHQESLHPHDAIAVAISS.

Belongs to the GTP cyclohydrolase IV family.

The enzyme catalyses GTP + H2O = 7,8-dihydroneopterin 3'-triphosphate + formate + H(+). Its pathway is cofactor biosynthesis; 7,8-dihydroneopterin triphosphate biosynthesis; 7,8-dihydroneopterin triphosphate from GTP: step 1/1. Its function is as follows. Converts GTP to 7,8-dihydroneopterin triphosphate. This Acinetobacter baylyi (strain ATCC 33305 / BD413 / ADP1) protein is GTP cyclohydrolase FolE2.